The following is a 176-amino-acid chain: Ribosome rescue factor SmrB (176 aa).

Residues 98-173 enclose the Smr domain; it reads LDLHGLTQKQ…GTAALLVLVE (76 aa).

It belongs to the SmrB family. Associates with collided ribosomes, but not with correctly translating polysomes.

Acts as a ribosome collision sensor. Detects stalled/collided disomes (pairs of ribosomes where the leading ribosome is stalled and a second ribosome has collided with it) and endonucleolytically cleaves mRNA at the 5' boundary of the stalled ribosome. Stalled/collided disomes form a new interface (primarily via the 30S subunits) that binds SmrB. Cleaved mRNA becomes available for tmRNA ligation, leading to ribosomal subunit dissociation and rescue of stalled ribosomes. This chain is Ribosome rescue factor SmrB, found in Yersinia enterocolitica serotype O:8 / biotype 1B (strain NCTC 13174 / 8081).